The chain runs to 298 residues: Leucine-rich repeat-containing protein 55 (298 aa).

Positions 1–34 (MGDTWAQLPWPGPPHSALLLVFFLLAAGVMHSDA) are cleaved as a signal peptide. In terms of domain architecture, LRRNT spans 35 to 65 (GASCPVLCTCRNQVVDCSNQRLFSVPPDLPM). 2 disulfides stabilise this stretch: cysteine 38/cysteine 44 and cysteine 42/cysteine 51. LRR repeat units follow at residues 66–87 (DTRNLSLAHNRIAAVPPGYLTC), 90–111 (ELRVLDLRNNSLMELPPGLFLH), 114–135 (RLAHLDLSYNNLSHVPADMFRE), 138–160 (GLVHIDLSHNPWLRRVHPQAFQG), and 163–186 (HLRDLDLSYGGLAFLSLEALEGLP). The region spanning 196–251 (NPWVCGCTMEPLLKWLRNRIQRCTADSQLAECRGPPEVEGAPLFSLTEESFKACHL) is the LRRCT domain. Disulfide bonds link cysteine 200–cysteine 227 and cysteine 202–cysteine 249. The chain crosses the membrane as a helical span at residues 259–279 (LFIAFVGFVVSIASVATNFLL).

As to quaternary structure, interacts with KCNMA1.

The protein resides in the cell membrane. Its function is as follows. Auxiliary protein of the large-conductance, voltage and calcium-activated potassium channel (BK alpha). Modulates gating properties by producing a marked shift in the BK channel's voltage dependence of activation in the hyperpolarizing direction, and in the absence of calcium. The polypeptide is Leucine-rich repeat-containing protein 55 (Lrrc55) (Rattus norvegicus (Rat)).